Reading from the N-terminus, the 174-residue chain is Thioredoxin O, mitochondrial (174 aa).

The N-terminal 59 residues, 1–59, are a transit peptide targeting the mitochondrion; that stretch reads MALAHRLCRLPRLLPLAAAAAASKPYLPGKPSPAPPPPLSSPPPFPSLSRLFSTTPSSS. In terms of domain architecture, Thioredoxin spans 60–172; sequence GDSSMVVVGS…LESTMESLHK (113 aa). Catalysis depends on nucleophile residues Cys96 and Cys99. The cysteines at positions 96 and 99 are disulfide-linked.

This sequence belongs to the thioredoxin family. Plant O-type subfamily.

It localises to the mitochondrion. Probable thiol-disulfide oxidoreductase that may participate in various redox reactions. This is Thioredoxin O, mitochondrial from Oryza sativa subsp. japonica (Rice).